Here is a 219-residue protein sequence, read N- to C-terminus: Large ribosomal subunit protein uL3 (219 aa).

Gln-151 carries the N5-methylglutamine modification.

It belongs to the universal ribosomal protein uL3 family. In terms of assembly, part of the 50S ribosomal subunit. Forms a cluster with proteins L14 and L19. Post-translationally, methylated by PrmB.

In terms of biological role, one of the primary rRNA binding proteins, it binds directly near the 3'-end of the 23S rRNA, where it nucleates assembly of the 50S subunit. The protein is Large ribosomal subunit protein uL3 of Blochmanniella floridana.